Consider the following 137-residue polypeptide: Small ribosomal subunit protein uS12 (137 aa).

The interval 1–25 is disordered; it reads MPTINQLVRQGRKSKTYKSDSPALS. Asp-102 is modified (3-methylthioaspartic acid).

The protein belongs to the universal ribosomal protein uS12 family. As to quaternary structure, part of the 30S ribosomal subunit. Contacts proteins S8 and S17. May interact with IF1 in the 30S initiation complex.

In terms of biological role, with S4 and S5 plays an important role in translational accuracy. Its function is as follows. Interacts with and stabilizes bases of the 16S rRNA that are involved in tRNA selection in the A site and with the mRNA backbone. Located at the interface of the 30S and 50S subunits, it traverses the body of the 30S subunit contacting proteins on the other side and probably holding the rRNA structure together. The combined cluster of proteins S8, S12 and S17 appears to hold together the shoulder and platform of the 30S subunit. This chain is Small ribosomal subunit protein uS12, found in Finegoldia magna (strain ATCC 29328 / DSM 20472 / WAL 2508) (Peptostreptococcus magnus).